The primary structure comprises 220 residues: Adenylate kinase (220 aa).

Residue 12-17 (GAGKGT) coordinates ATP. An NMP region spans residues 32–62 (STGDIFRDIVKKENDELGKKIKEIMERGELV). AMP-binding positions include Thr-33, Arg-38, 60 to 62 (ELV), 88 to 91 (GYPR), and Gln-95. The LID stretch occupies residues 129–166 (ARRICPKCGRIYNLISLPPKEDELCDDCKVKLVQREDD). Arg-130 is an ATP binding site. Zn(2+) contacts are provided by Cys-133 and Cys-136. 139–140 (IY) lines the ATP pocket. Zn(2+)-binding residues include Cys-153 and Cys-156. The AMP site is built by Arg-163 and Arg-174. Ile-202 provides a ligand contact to ATP.

This sequence belongs to the adenylate kinase family. As to quaternary structure, monomer.

The protein localises to the cytoplasm. It carries out the reaction AMP + ATP = 2 ADP. It functions in the pathway purine metabolism; AMP biosynthesis via salvage pathway; AMP from ADP: step 1/1. Its function is as follows. Catalyzes the reversible transfer of the terminal phosphate group between ATP and AMP. Plays an important role in cellular energy homeostasis and in adenine nucleotide metabolism. The chain is Adenylate kinase from Thermotoga petrophila (strain ATCC BAA-488 / DSM 13995 / JCM 10881 / RKU-1).